A 621-amino-acid chain; its full sequence is Elongation factor 4 (621 aa).

Positions 21–203 (DLIRNICIIA…AIVKRVPPPK (183 aa)) constitute a tr-type G domain. GTP contacts are provided by residues 33–38 (DHGKTT) and 150–153 (NKID).

This sequence belongs to the TRAFAC class translation factor GTPase superfamily. Classic translation factor GTPase family. LepA subfamily.

It is found in the cell inner membrane. The catalysed reaction is GTP + H2O = GDP + phosphate + H(+). In terms of biological role, required for accurate and efficient protein synthesis under certain stress conditions. May act as a fidelity factor of the translation reaction, by catalyzing a one-codon backward translocation of tRNAs on improperly translocated ribosomes. Back-translocation proceeds from a post-translocation (POST) complex to a pre-translocation (PRE) complex, thus giving elongation factor G a second chance to translocate the tRNAs correctly. Binds to ribosomes in a GTP-dependent manner. This chain is Elongation factor 4, found in Thermotoga maritima (strain ATCC 43589 / DSM 3109 / JCM 10099 / NBRC 100826 / MSB8).